The primary structure comprises 290 residues: MFKGSIVAIVTPFNKGVVDEKKLRELVEFQIAGGTDAIVPCGTTGESSTLDYEEHDRVIEIVVQQVNKRVPVIAGTGSNSTREAIEMTEHAKQLGADGALLVTPYYNKPTQEGLYRHYMAVAEAVALPQILYNVPGRTGVNLLPETVARLAEHKNIVAIKEATGSLQQASEVLALCGDKIDVLCGDDFITFPMMACGAKGVISVVANIMPKEVAALVDAFFAGKMEEARQWHLKLLKISNAMFIESNPVPVKTAVGLMGKASDEVRLPLAPMSDANKNKLISVMKEYKLI.

Thr-44 provides a ligand contact to pyruvate. Tyr-132 (proton donor/acceptor) is an active-site residue. The Schiff-base intermediate with substrate role is filled by Lys-160. Ile-202 contacts pyruvate.

Belongs to the DapA family. As to quaternary structure, homotetramer; dimer of dimers.

Its subcellular location is the cytoplasm. The enzyme catalyses L-aspartate 4-semialdehyde + pyruvate = (2S,4S)-4-hydroxy-2,3,4,5-tetrahydrodipicolinate + H2O + H(+). It participates in amino-acid biosynthesis; L-lysine biosynthesis via DAP pathway; (S)-tetrahydrodipicolinate from L-aspartate: step 3/4. Functionally, catalyzes the condensation of (S)-aspartate-beta-semialdehyde [(S)-ASA] and pyruvate to 4-hydroxy-tetrahydrodipicolinate (HTPA). This chain is 4-hydroxy-tetrahydrodipicolinate synthase, found in Geotalea daltonii (strain DSM 22248 / JCM 15807 / FRC-32) (Geobacter daltonii).